The chain runs to 294 residues: 4-hydroxy-tetrahydrodipicolinate synthase (294 aa).

T45 is a pyruvate binding site. Y133 serves as the catalytic Proton donor/acceptor. K161 acts as the Schiff-base intermediate with substrate in catalysis. I203 is a binding site for pyruvate.

It belongs to the DapA family. As to quaternary structure, homotetramer; dimer of dimers.

It localises to the cytoplasm. It carries out the reaction L-aspartate 4-semialdehyde + pyruvate = (2S,4S)-4-hydroxy-2,3,4,5-tetrahydrodipicolinate + H2O + H(+). It functions in the pathway amino-acid biosynthesis; L-lysine biosynthesis via DAP pathway; (S)-tetrahydrodipicolinate from L-aspartate: step 3/4. Catalyzes the condensation of (S)-aspartate-beta-semialdehyde [(S)-ASA] and pyruvate to 4-hydroxy-tetrahydrodipicolinate (HTPA). This chain is 4-hydroxy-tetrahydrodipicolinate synthase, found in Shewanella sp. (strain MR-7).